The following is a 568-amino-acid chain: Adenine deaminase (568 aa).

Belongs to the metallo-dependent hydrolases superfamily. Adenine deaminase family. Mn(2+) serves as cofactor.

It catalyses the reaction adenine + H2O + H(+) = hypoxanthine + NH4(+). The protein is Adenine deaminase of Clostridium perfringens (strain ATCC 13124 / DSM 756 / JCM 1290 / NCIMB 6125 / NCTC 8237 / Type A).